We begin with the raw amino-acid sequence, 42 residues long: Photosystem II reaction center protein J (42 aa).

The chain crosses the membrane as a helical span at residues isoleucine 10–phenylalanine 30.

Belongs to the PsbJ family. In terms of assembly, PSII is composed of 1 copy each of membrane proteins PsbA, PsbB, PsbC, PsbD, PsbE, PsbF, PsbH, PsbI, PsbJ, PsbK, PsbL, PsbM, PsbT, PsbX, PsbY, PsbZ, Psb30/Ycf12, at least 3 peripheral proteins of the oxygen-evolving complex and a large number of cofactors. It forms dimeric complexes.

Its subcellular location is the plastid. The protein resides in the chloroplast thylakoid membrane. Functionally, one of the components of the core complex of photosystem II (PSII). PSII is a light-driven water:plastoquinone oxidoreductase that uses light energy to abstract electrons from H(2)O, generating O(2) and a proton gradient subsequently used for ATP formation. It consists of a core antenna complex that captures photons, and an electron transfer chain that converts photonic excitation into a charge separation. The polypeptide is Photosystem II reaction center protein J (Staurastrum punctulatum (Green alga)).